A 509-amino-acid polypeptide reads, in one-letter code: Activin receptor type-1 (509 aa).

Residues 1–20 (MVDGVMILPVLMMMAFPSPS) form the signal peptide. Residues 21–123 (VEDEKPKVNQ…FPGTQNFHLE (103 aa)) are Extracellular-facing. N-linked (GlcNAc...) asparagine glycosylation is present at N102. A helical transmembrane segment spans residues 124-146 (VGLIILSVVFAVCLLACILGVAL). Over 147 to 509 (RKFKRRNQER…NSLDKLKTDC (363 aa)) the chain is Cytoplasmic. Residues 178–207 (STLAELLDHSCTSGSGSGLPFLVQRTVARQ) enclose the GS domain. Residues 208 to 502 (ITLLECVGKG…KTLTKIDNSL (295 aa)) form the Protein kinase domain. Residues 214 to 222 (VGKGRYGEV) and K235 each bind ATP. D336 (proton acceptor) is an active-site residue. Residue S501 is modified to Phosphoserine.

Belongs to the protein kinase superfamily. TKL Ser/Thr protein kinase family. TGFB receptor subfamily. As to quaternary structure, interacts with FKBP1A. Interacts with FCHO1. Interacts with CLU. Interacts with type II receptors AMHR2 and ACVR2A. Interacts with BMP7. Interacts with BMP9. Interacts with BMP6 (when glycosylated); the interaction may induce HAMP expression. Interacts with TSC22D1/TSC-22. The cofactor is Mg(2+). Mn(2+) serves as cofactor. In terms of tissue distribution, highly expressed in bone during developmental stages. Expressed in normal parenchymal cells, endothelial cells, fibroblasts and tumor-derived epithelial cells.

The protein resides in the membrane. The enzyme catalyses L-threonyl-[receptor-protein] + ATP = O-phospho-L-threonyl-[receptor-protein] + ADP + H(+). The catalysed reaction is L-seryl-[receptor-protein] + ATP = O-phospho-L-seryl-[receptor-protein] + ADP + H(+). Bone morphogenetic protein (BMP) type I receptor that is involved in a wide variety of biological processes, including bone, heart, cartilage, nervous, and reproductive system development and regulation. As a type I receptor, forms heterotetrameric receptor complexes with the type II receptors AMHR2, ACVR2A ors ACVR2B. Upon binding of ligands such as BMP7 or BMP9 to the heteromeric complexes, type II receptors transphosphorylate ACVR1 intracellular domain. In turn, ACVR1 kinase domain is activated and subsequently phosphorylates SMAD1/5/8 proteins that transduce the signal. In addition to its role in mediating BMP pathway-specific signaling, suppresses TGFbeta/activin pathway signaling by interfering with the binding of activin to its type II receptor. Besides canonical SMAD signaling, can activate non-canonical pathways such as p38 mitogen-activated protein kinases/MAPKs. May promote the expression of HAMP, potentially via its interaction with BMP6. The protein is Activin receptor type-1 (Acvr1) of Mus musculus (Mouse).